Here is a 291-residue protein sequence, read N- to C-terminus: Signal peptidase I (291 aa).

The Cytoplasmic segment spans residues 1–45; it reads MTMKKLTSTTTTLWDNKLFINNLKNFMQTNTESNNNKTTAQEWKS. A helical transmembrane segment spans residues 46–66; sequence FILVVVIALMIRILIIESFVV. At 67–291 the chain is on the periplasmic side; sequence PTGSMKATIL…IFRNLYSIED (225 aa). Residues serine 70 and lysine 133 contribute to the active site.

Belongs to the peptidase S26 family.

It is found in the cell inner membrane. The catalysed reaction is Cleavage of hydrophobic, N-terminal signal or leader sequences from secreted and periplasmic proteins.. In Rickettsia bellii (strain RML369-C), this protein is Signal peptidase I (lepB).